The sequence spans 472 residues: Putative F-box/LRR-repeat protein At5g54820 (472 aa).

One can recognise an F-box domain in the interval 6 to 54 (QDRLSSLPDILLIMIISFLPLKECVRTSVLSKRWRYLCLETTNLSFKES). LRR repeat units lie at residues 58–87 (NPDI…SITQ), 135–164 (NGDI…KIYG), 183–208 (IGWV…SIKN), 225–250 (VIEH…KYSG), 283–308 (SSRI…TVCP), and 338–363 (MHTK…GFDI).

This Arabidopsis thaliana (Mouse-ear cress) protein is Putative F-box/LRR-repeat protein At5g54820.